We begin with the raw amino-acid sequence, 924 residues long: TBC1 domain family member 30 (924 aa).

Positions M1–P11 are enriched in gly residues. 2 disordered regions span residues M1–S76 and E94–A134. Residues G47–W59 are compositionally biased toward basic and acidic residues. One can recognise a Rab-GAP TBC domain in the interval G249–G457. Disordered stretches follow at residues K541–E564, G776–G806, and H838–R924. Over residues S555 to E564 the composition is skewed to acidic residues. S800 carries the phosphoserine modification. Polar residues predominate over residues T858–P870. A compositionally biased stretch (gly residues) spans P914–R924.

The protein localises to the cell membrane. Its function is as follows. May act as a GTPase-activating protein for Rab family protein(s). This is TBC1 domain family member 30 (TBC1D30) from Homo sapiens (Human).